The sequence spans 98 residues: Aspartyl/glutamyl-tRNA(Asn/Gln) amidotransferase subunit C (98 aa).

The disordered stretch occupies residues 75–98 (EQALSGAPDSDDNRFKVPAILDEA).

This sequence belongs to the GatC family. Heterotrimer of A, B and C subunits.

The catalysed reaction is L-glutamyl-tRNA(Gln) + L-glutamine + ATP + H2O = L-glutaminyl-tRNA(Gln) + L-glutamate + ADP + phosphate + H(+). It catalyses the reaction L-aspartyl-tRNA(Asn) + L-glutamine + ATP + H2O = L-asparaginyl-tRNA(Asn) + L-glutamate + ADP + phosphate + 2 H(+). In terms of biological role, allows the formation of correctly charged Asn-tRNA(Asn) or Gln-tRNA(Gln) through the transamidation of misacylated Asp-tRNA(Asn) or Glu-tRNA(Gln) in organisms which lack either or both of asparaginyl-tRNA or glutaminyl-tRNA synthetases. The reaction takes place in the presence of glutamine and ATP through an activated phospho-Asp-tRNA(Asn) or phospho-Glu-tRNA(Gln). This Pseudarthrobacter chlorophenolicus (strain ATCC 700700 / DSM 12829 / CIP 107037 / JCM 12360 / KCTC 9906 / NCIMB 13794 / A6) (Arthrobacter chlorophenolicus) protein is Aspartyl/glutamyl-tRNA(Asn/Gln) amidotransferase subunit C.